Here is a 362-residue protein sequence, read N- to C-terminus: Peptide chain release factor 1 (362 aa).

An N5-methylglutamine modification is found at Q237.

The protein belongs to the prokaryotic/mitochondrial release factor family. Methylated by PrmC. Methylation increases the termination efficiency of RF1.

It is found in the cytoplasm. Its function is as follows. Peptide chain release factor 1 directs the termination of translation in response to the peptide chain termination codons UAG and UAA. This is Peptide chain release factor 1 from Aliivibrio salmonicida (strain LFI1238) (Vibrio salmonicida (strain LFI1238)).